Here is a 273-residue protein sequence, read N- to C-terminus: Dermonecrotic toxin LspaSicTox-alphaIA2iv (273 aa).

Histidine 5 is a catalytic residue. 2 residues coordinate Mg(2+): glutamate 25 and aspartate 27. The Nucleophile role is filled by histidine 41. 2 disulfides stabilise this stretch: cysteine 45–cysteine 51 and cysteine 47–cysteine 190. Aspartate 85 is a binding site for Mg(2+).

It belongs to the arthropod phospholipase D family. Class II subfamily. Mg(2+) is required as a cofactor. As to expression, expressed by the venom gland.

The protein resides in the secreted. It catalyses the reaction an N-(acyl)-sphingosylphosphocholine = an N-(acyl)-sphingosyl-1,3-cyclic phosphate + choline. It carries out the reaction an N-(acyl)-sphingosylphosphoethanolamine = an N-(acyl)-sphingosyl-1,3-cyclic phosphate + ethanolamine. The catalysed reaction is a 1-acyl-sn-glycero-3-phosphocholine = a 1-acyl-sn-glycero-2,3-cyclic phosphate + choline. The enzyme catalyses a 1-acyl-sn-glycero-3-phosphoethanolamine = a 1-acyl-sn-glycero-2,3-cyclic phosphate + ethanolamine. In terms of biological role, dermonecrotic toxins cleave the phosphodiester linkage between the phosphate and headgroup of certain phospholipids (sphingolipid and lysolipid substrates), forming an alcohol (often choline) and a cyclic phosphate. This toxin acts on sphingomyelin (SM). It may also act on ceramide phosphoethanolamine (CPE), lysophosphatidylcholine (LPC) and lysophosphatidylethanolamine (LPE), but not on lysophosphatidylserine (LPS), and lysophosphatidylglycerol (LPG). It acts by transphosphatidylation, releasing exclusively cyclic phosphate products as second products. Induces dermonecrosis, hemolysis, increased vascular permeability, edema, inflammatory response, and platelet aggregation. The sequence is that of Dermonecrotic toxin LspaSicTox-alphaIA2iv from Loxosceles spadicea (Recluse spider).